Here is a 245-residue protein sequence, read N- to C-terminus: tRNA (guanine-N(1)-)-methyltransferase (245 aa).

S-adenosyl-L-methionine is bound by residues G111 and 131-136; that span reads MGDYVL.

This sequence belongs to the RNA methyltransferase TrmD family. In terms of assembly, homodimer.

It localises to the cytoplasm. It carries out the reaction guanosine(37) in tRNA + S-adenosyl-L-methionine = N(1)-methylguanosine(37) in tRNA + S-adenosyl-L-homocysteine + H(+). Its function is as follows. Specifically methylates guanosine-37 in various tRNAs. This Staphylococcus aureus (strain MRSA252) protein is tRNA (guanine-N(1)-)-methyltransferase.